A 152-amino-acid chain; its full sequence is Ribosome maturation factor RimP (152 aa).

The protein belongs to the RimP family.

The protein localises to the cytoplasm. Functionally, required for maturation of 30S ribosomal subunits. This Stutzerimonas stutzeri (strain A1501) (Pseudomonas stutzeri) protein is Ribosome maturation factor RimP.